A 163-amino-acid polypeptide reads, in one-letter code: Small ribosomal subunit protein bS18c (163 aa).

Disordered stretches follow at residues 1–54 (MYTS…PGDR) and 121–163 (ITGP…SSDC). Residues 7 to 48 (PFHKSKQTFHKSKQTFRKSKQTFRKFKQPFRKPKQPFRRRPR) show a composition bias toward basic residues. Over residues 140–163 (NSNRNLRNSNQTLRNNNRNLSSDC) the composition is skewed to low complexity.

Belongs to the bacterial ribosomal protein bS18 family. As to quaternary structure, part of the 30S ribosomal subunit.

Its subcellular location is the plastid. It is found in the chloroplast. This is Small ribosomal subunit protein bS18c from Oryza nivara (Indian wild rice).